We begin with the raw amino-acid sequence, 350 residues long: Probable V-type proton ATPase subunit d 2 (350 aa).

This sequence belongs to the V-ATPase V0D/AC39 subunit family. As to quaternary structure, V-ATPase is a heteromultimeric enzyme made up of two complexes: the ATP-hydrolytic V1 complex and the proton translocation V0 complex. The V1 complex consists of three catalytic AB heterodimers that form a heterohexamer, three peripheral stalks each consisting of EG heterodimers, one central rotor including subunits D and F, and the regulatory subunits C and H. The proton translocation complex V0 consists of the proton transport subunit a, a ring of proteolipid subunits c9c'', rotary subunit d, subunits e and f, and the accessory subunits VhaAC45 and ATP6AP2.

In terms of biological role, subunit of the V0 complex of vacuolar(H+)-ATPase (V-ATPase), a multisubunit enzyme composed of a peripheral complex (V1) that hydrolyzes ATP and a membrane integral complex (V0) that translocates protons. V-ATPase is responsible for acidifying and maintaining the pH of intracellular compartments and in some cell types, is targeted to the plasma membrane, where it is responsible for acidifying the extracellular environment. May play a role in coupling of proton transport and ATP hydrolysis. The polypeptide is Probable V-type proton ATPase subunit d 2 (VhaAC39-2) (Drosophila melanogaster (Fruit fly)).